Consider the following 43-residue polypeptide: Protein PsbN (43 aa).

The helical transmembrane segment at 5–27 (TVFSIFISCLLLSLTGYSLYTAF) threads the bilayer.

Belongs to the PsbN family.

Its subcellular location is the plastid. The protein resides in the chloroplast thylakoid membrane. Its function is as follows. May play a role in photosystem I and II biogenesis. The sequence is that of Protein PsbN from Chlorokybus atmophyticus (Soil alga).